The following is a 342-amino-acid chain: Ribosomal RNA small subunit methyltransferase C (342 aa).

This sequence belongs to the methyltransferase superfamily. RsmC family. In terms of assembly, monomer.

It is found in the cytoplasm. It carries out the reaction guanosine(1207) in 16S rRNA + S-adenosyl-L-methionine = N(2)-methylguanosine(1207) in 16S rRNA + S-adenosyl-L-homocysteine + H(+). Specifically methylates the guanine in position 1207 of 16S rRNA in the 30S particle. The chain is Ribosomal RNA small subunit methyltransferase C from Cronobacter sakazakii (strain ATCC BAA-894) (Enterobacter sakazakii).